Reading from the N-terminus, the 107-residue chain is Nucleoid-associated protein GbCGDNIH1_0260 (107 aa).

The protein belongs to the YbaB/EbfC family. As to quaternary structure, homodimer.

The protein localises to the cytoplasm. The protein resides in the nucleoid. Binds to DNA and alters its conformation. May be involved in regulation of gene expression, nucleoid organization and DNA protection. The protein is Nucleoid-associated protein GbCGDNIH1_0260 of Granulibacter bethesdensis (strain ATCC BAA-1260 / CGDNIH1).